The chain runs to 581 residues: Proline--tRNA ligase (581 aa).

This sequence belongs to the class-II aminoacyl-tRNA synthetase family. ProS type 1 subfamily. Homodimer.

Its subcellular location is the cytoplasm. The enzyme catalyses tRNA(Pro) + L-proline + ATP = L-prolyl-tRNA(Pro) + AMP + diphosphate. In terms of biological role, catalyzes the attachment of proline to tRNA(Pro) in a two-step reaction: proline is first activated by ATP to form Pro-AMP and then transferred to the acceptor end of tRNA(Pro). As ProRS can inadvertently accommodate and process non-cognate amino acids such as alanine and cysteine, to avoid such errors it has two additional distinct editing activities against alanine. One activity is designated as 'pretransfer' editing and involves the tRNA(Pro)-independent hydrolysis of activated Ala-AMP. The other activity is designated 'posttransfer' editing and involves deacylation of mischarged Ala-tRNA(Pro). The misacylated Cys-tRNA(Pro) is not edited by ProRS. This Paracidovorax citrulli (strain AAC00-1) (Acidovorax citrulli) protein is Proline--tRNA ligase.